A 229-amino-acid chain; its full sequence is MESTRMTRTLAAMQLMDSALPTGAFSHSHGFETYLHRGVIHDASSFGVWLQMFIQQQLTFTDAVVIREVFRSTSLKRVGELDQLITAQAVPEQIRTAGKTMGIRMLEIAEQGYPDPALIWYRREVDQRTLSGHPAIVWALVARALDVAEDEAVAQHLYATSMSLIHNAVRAVPFGQNAGQHLIRQAQEWVTAAVGNSADIEFDDIGSITPGLEIAQMQHENQRARMFMS.

It belongs to the UreF family. In terms of assembly, ureD, UreF and UreG form a complex that acts as a GTP-hydrolysis-dependent molecular chaperone, activating the urease apoprotein by helping to assemble the nickel containing metallocenter of UreC. The UreE protein probably delivers the nickel.

Its subcellular location is the cytoplasm. Functionally, required for maturation of urease via the functional incorporation of the urease nickel metallocenter. This chain is Urease accessory protein UreF, found in Corynebacterium efficiens (strain DSM 44549 / YS-314 / AJ 12310 / JCM 11189 / NBRC 100395).